The sequence spans 189 residues: Ras-like protein 1 (189 aa).

GTP is bound at residue 10–17 (GAGGVGKS). Residues 32–40 (YDPTIEDSY) carry the Effector region motif. GTP is bound by residues 57 to 61 (DTAGQ) and 116 to 119 (NKCD). A Cysteine methyl ester modification is found at Cys186. Residue Cys186 is the site of S-geranylgeranyl cysteine attachment. Positions 187 to 189 (KML) are cleaved as a propeptide — removed in mature form.

Belongs to the small GTPase superfamily. Ras family.

It is found in the cell membrane. The catalysed reaction is GTP + H2O = GDP + phosphate + H(+). Alternates between an inactive form bound to GDP and an active form bound to GTP. Activated by a guanine nucleotide-exchange factor (GEF) and inactivated by a GTPase-activating protein (GAP). Functionally, ras proteins bind GDP/GTP and possess intrinsic GTPase activity. Plays a role in eye development by regulating cell growth, survival of postmitotic ommatidial cells and differentiation of photoreceptor cells. During larval development, mediates Ptth/tor signaling leading to the production of ecdysone, a hormone required for the initiation of metamorphosis. This is Ras-like protein 1 from Drosophila grimshawi (Hawaiian fruit fly).